The chain runs to 442 residues: uncharacterized protein (442 aa).

The [4Fe-4S] cluster site is built by C43, C49, C52, and C130. 4 residues coordinate S-adenosyl-L-methionine: Q273, Y302, E323, and D372. Catalysis depends on C399, which acts as the Nucleophile.

It belongs to the class I-like SAM-binding methyltransferase superfamily. RNA M5U methyltransferase family.

This is an uncharacterized protein from Protochlamydia amoebophila (strain UWE25).